Here is a 693-residue protein sequence, read N- to C-terminus: Polyribonucleotide nucleotidyltransferase (693 aa).

2 residues coordinate Mg(2+): Asp-489 and Asp-495. Residues 556 to 615 form the KH domain; that stretch reads PQIHIMNVNPAKIKDVVGRGGSVVKGIVEKTGAQIDTSDSGEVKIFAKDKRSLDLAKSMV. An S1 motif domain is found at 625 to 693; the sequence is GQIYKGKIVK…GRVKLSLVAR (69 aa).

This sequence belongs to the polyribonucleotide nucleotidyltransferase family. In terms of assembly, component of the RNA degradosome, which is a multiprotein complex involved in RNA processing and mRNA degradation. It depends on Mg(2+) as a cofactor.

Its subcellular location is the cytoplasm. It catalyses the reaction RNA(n+1) + phosphate = RNA(n) + a ribonucleoside 5'-diphosphate. Functionally, involved in mRNA degradation. Catalyzes the phosphorolysis of single-stranded polyribonucleotides processively in the 3'- to 5'-direction. This Francisella philomiragia subsp. philomiragia (strain ATCC 25017 / CCUG 19701 / FSC 153 / O#319-036) protein is Polyribonucleotide nucleotidyltransferase.